The chain runs to 119 residues: Large ribosomal subunit protein bL20 (119 aa).

It belongs to the bacterial ribosomal protein bL20 family.

In terms of biological role, binds directly to 23S ribosomal RNA and is necessary for the in vitro assembly process of the 50S ribosomal subunit. It is not involved in the protein synthesizing functions of that subunit. This Teredinibacter turnerae (strain ATCC 39867 / T7901) protein is Large ribosomal subunit protein bL20.